Consider the following 598-residue polypeptide: Fructan 6-exohydrolase (598 aa).

Positions 1 to 30 are cleaved as a signal peptide; the sequence is MAARLPLAACVVAFHLCLLLSSLVRSPSTA. Asp65 is a catalytic residue. Asn93, Asn288, and Asn351 each carry an N-linked (GlcNAc...) asparagine glycan. Cys451 and Cys497 form a disulfide bridge. Residue Asn572 is glycosylated (N-linked (GlcNAc...) asparagine).

Belongs to the glycosyl hydrolase 32 family. Expressed in leaves, stems, roots and inflorescences. Maximum expression is detected in stems, particularly the penultimate internode.

The enzyme catalyses Hydrolysis of terminal, non-reducing (2-&gt;6)-linked beta-D-fructofuranose residues in fructans.. With respect to regulation, not inhibited by sucrose. Functionally, hydrolyzes levan-type beta-(2-&gt;6)-linked fructans to fructose, but not inulin-type beta-(2-&gt;1)-linked fructans. The polypeptide is Fructan 6-exohydrolase (Triticum aestivum (Wheat)).